Here is a 356-residue protein sequence, read N- to C-terminus: Replication factor C subunit 3 (356 aa).

Lys-20 carries the N6-acetyllysine modification. At Ser-125 the chain carries Phosphoserine.

It belongs to the activator 1 small subunits family. In terms of assembly, subunit of the RFC complex, an heteropentameric complex consisting of a large subunit RFC1 and four small subunits RFC2, RFC3, RFC4 and RFC5; the RFC complex interacts with PCNA. Forms an heterotetrameric complex with RFC2, RFC4 and RFC5; this complex has ATPase activity but is not stimulated by PCNA. The heterotetramer of subunits RFC2, RFC3, RFC4 and RFC5 interacts with RAD17. Interacts with CNTD1; this interaction facilitates crossover formation.

Its subcellular location is the nucleus. Its function is as follows. Subunit of the replication factor C (RFC) complex which acts during elongation of primed DNA templates by DNA polymerases delta and epsilon, and is necessary for ATP-dependent loading of proliferating cell nuclear antigen (PCNA) onto primed DNA. The chain is Replication factor C subunit 3 (Rfc3) from Mus musculus (Mouse).